The following is an 886-amino-acid chain: Cytosolic carboxypeptidase-like protein 5 (886 aa).

In terms of domain architecture, Peptidase M14 spans 157–570 (YPFSYSDCQD…AMAIAALDMA (414 aa)). Zn(2+)-binding residues include histidine 252 and glutamate 255. Residues 344 to 353 (AKSPTNQQPT) show a composition bias toward polar residues. Disordered regions lie at residues 344–363 (AKSP…APLS) and 374–401 (EAHL…KTDP). Histidine 434 is a Zn(2+) binding site. The active-site Proton donor/acceptor is the glutamate 516. 2 disordered regions span residues 602–737 (GLTS…RNMG) and 783–846 (TRLQ…PAFS). Positions 621 to 635 (PKSNNSLPVSCSENA) are enriched in polar residues. The segment covering 643-654 (STGTSTGGSSSS) has biased composition (low complexity). The span at 655 to 666 (QQNSPQMKNSPS) shows a compositional bias: polar residues. Residues 714 to 737 (STTSSLAPSPTLASSGPTSSRNMG) show a composition bias toward low complexity. The segment covering 805–815 (SSPTSPIPQTR) has biased composition (polar residues). Serine 841 carries the post-translational modification Phosphoserine.

Belongs to the peptidase M14 family. Zn(2+) serves as cofactor. In terms of tissue distribution, widely expressed. Highly expressed in testis, and moderately in pituitary, brain, eye and kidney.

The protein localises to the cytoplasm. The protein resides in the cytosol. Its subcellular location is the nucleus. It is found in the cytoskeleton. It localises to the spindle. The protein localises to the midbody. The catalysed reaction is gamma-L-glutamyl-L-glutamyl-[protein] + H2O = L-glutamyl-[protein] + L-glutamate. It catalyses the reaction (L-glutamyl)(n+1)-gamma-L-glutamyl-L-glutamyl-[protein] + H2O = (L-glutamyl)(n)-gamma-L-glutamyl-L-glutamyl-[protein] + L-glutamate. The enzyme catalyses C-terminal L-alpha-aminoacyl-L-glutamyl-[tubulin] + H2O = C-terminal L-alpha-aminoacyl-[tubulin] + L-glutamate. It carries out the reaction C-terminal L-alpha-aminoacyl-L-glutamyl-L-glutamyl-[tubulin] + H2O = C-terminal L-alpha-aminoacyl-L-glutamyl-[tubulin] + L-glutamate. Its function is as follows. Metallocarboxypeptidase that mediates deglutamylation of tubulin and non-tubulin target proteins. Catalyzes the removal of polyglutamate side chains present on the gamma-carboxyl group of glutamate residues within the C-terminal tail of alpha- and beta-tubulin. Cleaves alpha- and gamma-linked polyglutamate tubulin side-chain, as well as the branching point glutamate. Also catalyzes the removal of alpha-linked glutamate residues from the carboxy-terminus of alpha-tubulin. Mediates deglutamylation of nucleotidyltransferase CGAS, leading to CGAS antiviral defense response activation. The chain is Cytosolic carboxypeptidase-like protein 5 from Mus musculus (Mouse).